Here is a 514-residue protein sequence, read N- to C-terminus: Serine/threonine-protein kinase 33 (514 aa).

The segment covering 65 to 86 (INRDITSRKDLPSRTSNVERKA) has biased composition (basic and acidic residues). The disordered stretch occupies residues 65-91 (INRDITSRKDLPSRTSNVERKASQQQW). A Protein kinase domain is found at 116–381 (YTFGRILGKG…AKELLDNQWL (266 aa)). ATP contacts are provided by residues 122–130 (LGKGSFGIV) and Lys-145. Asp-238 acts as the Proton acceptor in catalysis. 2 disordered regions span residues 402-468 (KNNP…DMCS) and 485-514 (MEKT…KKKL). Position 407 is a phosphoserine (Ser-407). The span at 413 to 426 (TEEKNKPSTEEKLK) shows a compositional bias: basic and acidic residues. The span at 449 to 468 (STAYEKQFPATSKDNFDMCS) shows a compositional bias: polar residues.

Belongs to the protein kinase superfamily. CAMK Ser/Thr protein kinase family. CaMK subfamily. In terms of assembly, homodimer. In terms of processing, autophosphorylated. In terms of tissue distribution, highly expressed in testis, fetal lung and heart, followed by pituitary gland, kidney, interventricular septum, pancreas, heart, trachea, thyroid gland and uterus. Weak hybridization signals were observed in the following tissues: amygdala, aorta, esophagus, colon ascending, colon transverse, skeletal muscle, spleen, peripheral blood leukocyte, lymph node, bone marrow, placenta, prostate, liver, salivary gland, mammary gland, some tumor cell lines, fetal brain, fetal liver, fetal spleen and fetal thymus. No signal at all was detectable in RNA from tissues of the nervous system.

Its subcellular location is the cytoplasm. It is found in the cytoskeleton. The protein resides in the perinuclear region. It carries out the reaction L-seryl-[protein] + ATP = O-phospho-L-seryl-[protein] + ADP + H(+). It catalyses the reaction L-threonyl-[protein] + ATP = O-phospho-L-threonyl-[protein] + ADP + H(+). With respect to regulation, specifically inhibited by CDD-2807 ((3-([1,1'-Biphenyl]-2-ylethynyl)-1H-indazol-5-yl)(2,6-diazaspiro[3.5]nonan-2-yl)methanone). Its function is as follows. Serine/threonine protein kinase required for spermatid differentiation and male fertility. Promotes sperm flagella assembly during spermatogenesis by mediating phosphorylation of fibrous sheath proteins AKAP3 and AKAP4. Also phosphorylates vimentin/VIM, thereby regulating the dynamic behavior of the intermediate filament cytoskeleton. This chain is Serine/threonine-protein kinase 33, found in Homo sapiens (Human).